A 37-amino-acid polypeptide reads, in one-letter code: Large ribosomal subunit protein bL36c (37 aa).

Belongs to the bacterial ribosomal protein bL36 family.

It is found in the plastid. Its subcellular location is the chloroplast. The polypeptide is Large ribosomal subunit protein bL36c (Bigelowiella natans (Pedinomonas minutissima)).